Reading from the N-terminus, the 421-residue chain is Chitin deacetylase (421 aa).

Positions 1–21 (MQIKTFALSAAIAQVATLALA) are cleaved as a signal peptide. N-linked (GlcNAc...) asparagine glycans are attached at residues N39, N70, N87, and N106. In terms of domain architecture, NodB homology spans 157–349 (ETWGLTYDDG…YKQVIDVATC (193 aa)). Catalysis depends on D164, which acts as the Proton acceptor. D164 contributes to the acetate binding site. D165 contacts Co(2+). N168 is a glycosylation site (N-linked (GlcNAc...) asparagine). Co(2+) contacts are provided by H214 and H218. Y255 contributes to the acetate binding site. N-linked (GlcNAc...) asparagine glycosylation is present at N307. Residue H320 is the Proton donor of the active site. Residues N323, N351, and N367 are each glycosylated (N-linked (GlcNAc...) asparagine). T390 carries the GPI-anchor amidated threonine lipid modification. The propeptide at 391–421 (AAAHIQASTSGAMSVLPNLALISAFIATLLF) is removed in mature form.

Belongs to the polysaccharide deacetylase family. The cofactor is Co(2+).

It localises to the secreted. Its subcellular location is the cell wall. The protein resides in the cell membrane. The catalysed reaction is [(1-&gt;4)-N-acetyl-beta-D-glucosaminyl](n) + n H2O = chitosan + n acetate. Hydrolyzes the N-acetamido groups of N-acetyl-D-glucosamine residues in chitin to form chitosan and acetate. In Amylomyces rouxii (Filamentous fungus), this protein is Chitin deacetylase.